A 283-amino-acid chain; its full sequence is Thymidylate synthase (283 aa).

Arg-22 contacts dUMP. The Nucleophile role is filled by Cys-160. DUMP is bound by residues 180-183 (RSCD), Asn-191, and 221-223 (HIY). Position 183 (Asp-183) interacts with (6R)-5,10-methylene-5,6,7,8-tetrahydrofolate. Position 282 (Ser-282) interacts with (6R)-5,10-methylene-5,6,7,8-tetrahydrofolate.

The protein belongs to the thymidylate synthase family. Bacterial-type ThyA subfamily. In terms of assembly, homodimer.

The protein resides in the cytoplasm. It catalyses the reaction dUMP + (6R)-5,10-methylene-5,6,7,8-tetrahydrofolate = 7,8-dihydrofolate + dTMP. It functions in the pathway pyrimidine metabolism; dTTP biosynthesis. Its function is as follows. Catalyzes the reductive methylation of 2'-deoxyuridine-5'-monophosphate (dUMP) to 2'-deoxythymidine-5'-monophosphate (dTMP) while utilizing 5,10-methylenetetrahydrofolate (mTHF) as the methyl donor and reductant in the reaction, yielding dihydrofolate (DHF) as a by-product. This enzymatic reaction provides an intracellular de novo source of dTMP, an essential precursor for DNA biosynthesis. The polypeptide is Thymidylate synthase (Haemophilus influenzae (strain PittEE)).